The following is an 89-amino-acid chain: Small ribosomal subunit protein uS15 (89 aa).

This sequence belongs to the universal ribosomal protein uS15 family. Part of the 30S ribosomal subunit. Forms a bridge to the 50S subunit in the 70S ribosome, contacting the 23S rRNA.

One of the primary rRNA binding proteins, it binds directly to 16S rRNA where it helps nucleate assembly of the platform of the 30S subunit by binding and bridging several RNA helices of the 16S rRNA. In terms of biological role, forms an intersubunit bridge (bridge B4) with the 23S rRNA of the 50S subunit in the ribosome. The protein is Small ribosomal subunit protein uS15 of Pseudomonas savastanoi pv. phaseolicola (strain 1448A / Race 6) (Pseudomonas syringae pv. phaseolicola (strain 1448A / Race 6)).